The sequence spans 427 residues: MLDIKWIRENPEALDAALAKRGAEPLAQNLVALDEKRRSAVQKAQDLLSRRNLASKEIGAALSQKNGELAEKLKVEVAELKAMLPAVEEEDRQLTAELNDALSRIPNIPFDDVPVGKDEHDNVVTRTVGEKPRWNHTPKEHFEIGEALGYMDFERAAKLSGSRFTVLTGPLARLERALGQFMIDLHTREHGYTEVSSPLMVRAEALFGTGNLPKFEEDLFKTTDGRYLIPTAEVTLTNLVREEILDQEKLPLRFTALTPSFRSEAGSAGRDTRGMLRQHQFWKCELVSITDAESAVAEHERMTACAEDVLKRLGLHFRTMTLCTGDMGFGSRKTYDLEVWLPGQNAFREISSCSVCGDFQARRMNARYRGKDDKSNRFVHTLNGSGTAVGRCLIAVLENYLNEDGSVTIPDVLLPYMGGLTKIERAA.

T231 to E233 is an L-serine binding site. An ATP-binding site is contributed by R262 to E264. E285 contacts L-serine. E349–S352 contacts ATP. S385 provides a ligand contact to L-serine.

Belongs to the class-II aminoacyl-tRNA synthetase family. Type-1 seryl-tRNA synthetase subfamily. Homodimer. The tRNA molecule binds across the dimer.

Its subcellular location is the cytoplasm. It carries out the reaction tRNA(Ser) + L-serine + ATP = L-seryl-tRNA(Ser) + AMP + diphosphate + H(+). The enzyme catalyses tRNA(Sec) + L-serine + ATP = L-seryl-tRNA(Sec) + AMP + diphosphate + H(+). It participates in aminoacyl-tRNA biosynthesis; selenocysteinyl-tRNA(Sec) biosynthesis; L-seryl-tRNA(Sec) from L-serine and tRNA(Sec): step 1/1. In terms of biological role, catalyzes the attachment of serine to tRNA(Ser). Is also able to aminoacylate tRNA(Sec) with serine, to form the misacylated tRNA L-seryl-tRNA(Sec), which will be further converted into selenocysteinyl-tRNA(Sec). This Rhizobium leguminosarum bv. trifolii (strain WSM2304) protein is Serine--tRNA ligase.